A 103-amino-acid polypeptide reads, in one-letter code: Histone H4 (103 aa).

Over residues 1–14 (MSGRGKGGKGLGKG) the composition is skewed to gly residues. Residues 1-20 (MSGRGKGGKGLGKGGAKRHR) are disordered. The DNA-binding element occupies 17–21 (KRHRK).

This sequence belongs to the histone H4 family. In terms of assembly, the nucleosome is a histone octamer containing two molecules each of H2A, H2B, H3 and H4 assembled in one H3-H4 heterotetramer and two H2A-H2B heterodimers. The octamer wraps approximately 147 bp of DNA.

Its subcellular location is the nucleus. It is found in the chromosome. Core component of nucleosome. Nucleosomes wrap and compact DNA into chromatin, limiting DNA accessibility to the cellular machineries which require DNA as a template. Histones thereby play a central role in transcription regulation, DNA repair, DNA replication and chromosomal stability. DNA accessibility is regulated via a complex set of post-translational modifications of histones, also called histone code, and nucleosome remodeling. This Physarum polycephalum (Slime mold) protein is Histone H4 (H41).